A 125-amino-acid polypeptide reads, in one-letter code: UPF0102 protein Mpop_0474 (125 aa).

Belongs to the UPF0102 family.

The polypeptide is UPF0102 protein Mpop_0474 (Methylorubrum populi (strain ATCC BAA-705 / NCIMB 13946 / BJ001) (Methylobacterium populi)).